We begin with the raw amino-acid sequence, 519 residues long: Bifunctional pantoate ligase/cytidylate kinase (519 aa).

The interval 1–282 (MNLTILRTKT…CGNTRLIDHG (282 aa)) is pantoate--beta-alanine ligase. 30–37 (MGGLHQGH) serves as a coordination point for ATP. The Proton donor role is filled by H37. Q66 serves as a coordination point for (R)-pantoate. Q66 contributes to the beta-alanine binding site. 155–158 (GEKD) provides a ligand contact to ATP. Q161 provides a ligand contact to (R)-pantoate. Residue 192-195 (CSSR) participates in ATP binding. The interval 283 to 519 (FLMKRNPIVA…PQEVWPTNAT (237 aa)) is cytidylate kinase.

The protein in the N-terminal section; belongs to the pantothenate synthetase family. This sequence in the C-terminal section; belongs to the cytidylate kinase family. Type 1 subfamily.

The protein localises to the cytoplasm. It carries out the reaction (R)-pantoate + beta-alanine + ATP = (R)-pantothenate + AMP + diphosphate + H(+). The enzyme catalyses CMP + ATP = CDP + ADP. It catalyses the reaction dCMP + ATP = dCDP + ADP. It participates in cofactor biosynthesis; (R)-pantothenate biosynthesis; (R)-pantothenate from (R)-pantoate and beta-alanine: step 1/1. In terms of biological role, catalyzes the condensation of pantoate with beta-alanine in an ATP-dependent reaction via a pantoyl-adenylate intermediate. Its function is as follows. Catalyzes the transfer of a phosphate group from ATP to either CMP or dCMP to form CDP or dCDP and ADP, respectively. This is Bifunctional pantoate ligase/cytidylate kinase from Prochlorococcus marinus (strain SARG / CCMP1375 / SS120).